Here is a 133-residue protein sequence, read N- to C-terminus: Osteocrin (133 aa).

A signal peptide spans 1–27 (MLDWRLASAHFILAVTLTLWSSGKVLS). Arginine 132 is modified (arginine amide).

It belongs to the Osteocrin family. Interacts with NPR3. In terms of tissue distribution, enriched in neocortical regions of the developing cerebral cortex. Not expressed in other compartments of the neocortical wall or in brain regions such as the hippocampus, striatum, mediodorsal nucleus of the thalamus and cerebellum. Also expressed in bone. In developing neonatal rib bone, present at high level in osteoblasts on bone-forming surfaces, in newly incorporated osteocytes and in some late hypertrophic chondrocytes (at protein level). In adult bone, localizes specifically to osteoblasts and young osteocytes at bone-forming sites (at protein level).

The protein localises to the secreted. In terms of biological role, hormone that acts as a regulator of dendritic growth in the developing cerebral cortex in response to sensory experience. Induced in the brain following membrane depolarization and inhibits dendritic branching in neurons of the developing cortex. Probably acts by binding to natriuretic peptide receptor NPR3/NPR-C, thereby preventing binding between NPR3/NPR-C and natriuretic peptides, leading to increase cGMP production. This is Osteocrin from Homo sapiens (Human).